Consider the following 103-residue polypeptide: Large ribosomal subunit protein bL21 (103 aa).

The protein belongs to the bacterial ribosomal protein bL21 family. As to quaternary structure, part of the 50S ribosomal subunit. Contacts protein L20.

Functionally, this protein binds to 23S rRNA in the presence of protein L20. The protein is Large ribosomal subunit protein bL21 of Clostridium kluyveri (strain NBRC 12016).